The sequence spans 82 residues: MSKSQINLQDAFLNQVRKDKIPVTVFLVNGFQIKGMVRGFDNFTVIIEVDQKQQLVYKHAISTVAPLRPISMLNLEAKSDDD.

The region spanning 10-70 (DAFLNQVRKD…ISTVAPLRPI (61 aa)) is the Sm domain.

The protein belongs to the Hfq family. In terms of assembly, homohexamer.

In terms of biological role, RNA chaperone that binds small regulatory RNA (sRNAs) and mRNAs to facilitate mRNA translational regulation in response to envelope stress, environmental stress and changes in metabolite concentrations. Also binds with high specificity to tRNAs. This is RNA-binding protein Hfq from Syntrophomonas wolfei subsp. wolfei (strain DSM 2245B / Goettingen).